Here is a 289-residue protein sequence, read N- to C-terminus: ATP synthase gamma chain (289 aa).

Belongs to the ATPase gamma chain family. In terms of assembly, F-type ATPases have 2 components, CF(1) - the catalytic core - and CF(0) - the membrane proton channel. CF(1) has five subunits: alpha(3), beta(3), gamma(1), delta(1), epsilon(1). CF(0) has three main subunits: a, b and c.

It is found in the cell inner membrane. In terms of biological role, produces ATP from ADP in the presence of a proton gradient across the membrane. The gamma chain is believed to be important in regulating ATPase activity and the flow of protons through the CF(0) complex. The protein is ATP synthase gamma chain of Azobacteroides pseudotrichonymphae genomovar. CFP2.